The chain runs to 281 residues: Bis(5'-nucleosyl)-tetraphosphatase, symmetrical (281 aa).

This sequence belongs to the Ap4A hydrolase family.

The catalysed reaction is P(1),P(4)-bis(5'-adenosyl) tetraphosphate + H2O = 2 ADP + 2 H(+). Its function is as follows. Hydrolyzes diadenosine 5',5'''-P1,P4-tetraphosphate to yield ADP. The chain is Bis(5'-nucleosyl)-tetraphosphatase, symmetrical from Delftia acidovorans (strain DSM 14801 / SPH-1).